The primary structure comprises 321 residues: Coproporphyrin III ferrochelatase (321 aa).

The Fe(2+) site is built by histidine 185 and glutamate 267.

Belongs to the ferrochelatase family.

It is found in the cytoplasm. The enzyme catalyses Fe-coproporphyrin III + 2 H(+) = coproporphyrin III + Fe(2+). Its pathway is porphyrin-containing compound metabolism; protoheme biosynthesis. Functionally, involved in coproporphyrin-dependent heme b biosynthesis. Catalyzes the insertion of ferrous iron into coproporphyrin III to form Fe-coproporphyrin III. The polypeptide is Coproporphyrin III ferrochelatase (Lacticaseibacillus casei (strain BL23) (Lactobacillus casei)).